A 313-amino-acid polypeptide reads, in one-letter code: tRNA pseudouridine synthase B (313 aa).

H44 serves as a coordination point for substrate. Catalysis depends on D49, which acts as the Nucleophile. The substrate site is built by Y77, Y180, and L201.

It belongs to the pseudouridine synthase TruB family. Type 1 subfamily.

The enzyme catalyses uridine(55) in tRNA = pseudouridine(55) in tRNA. In terms of biological role, responsible for synthesis of pseudouridine from uracil-55 in the psi GC loop of transfer RNAs. This Hamiltonella defensa subsp. Acyrthosiphon pisum (strain 5AT) protein is tRNA pseudouridine synthase B.